Here is a 517-residue protein sequence, read N- to C-terminus: Succinyl-CoA:3-ketoacid coenzyme A transferase 2, mitochondrial (517 aa).

A mitochondrion-targeting transit peptide spans 1-39; it reads MAALRLLASVLGRGVPAGGSGLALSQGCARCFATSPRLR. The 5-glutamyl coenzyme A thioester intermediate role is filled by Glu341.

Belongs to the 3-oxoacid CoA-transferase family. Homodimer. Testis specific.

It is found in the mitochondrion. It carries out the reaction a 3-oxo acid + succinyl-CoA = a 3-oxoacyl-CoA + succinate. It functions in the pathway ketone metabolism; succinyl-CoA degradation; acetoacetyl-CoA from succinyl-CoA: step 1/1. Key enzyme for ketone body catabolism. Transfers the CoA moiety from succinate to acetoacetate. Formation of the enzyme-CoA intermediate proceeds via an unstable anhydride species formed between the carboxylate groups of the enzyme and substrate. In Homo sapiens (Human), this protein is Succinyl-CoA:3-ketoacid coenzyme A transferase 2, mitochondrial (OXCT2).